We begin with the raw amino-acid sequence, 467 residues long: Glutamate--tRNA ligase (467 aa).

The short motif at 9-19 (PSPTGFLHIGG) is the 'HIGH' region element. A 'KMSKS' region motif is present at residues 241-245 (KLSKR). Position 244 (Lys244) interacts with ATP.

Belongs to the class-I aminoacyl-tRNA synthetase family. Glutamate--tRNA ligase type 1 subfamily. In terms of assembly, monomer.

It localises to the cytoplasm. The catalysed reaction is tRNA(Glu) + L-glutamate + ATP = L-glutamyl-tRNA(Glu) + AMP + diphosphate. In terms of biological role, catalyzes the attachment of glutamate to tRNA(Glu) in a two-step reaction: glutamate is first activated by ATP to form Glu-AMP and then transferred to the acceptor end of tRNA(Glu). In Methylobacillus flagellatus (strain ATCC 51484 / DSM 6875 / VKM B-1610 / KT), this protein is Glutamate--tRNA ligase.